The primary structure comprises 340 residues: MAIMNDIAQDAARAWDIIAGPFIRPGTTPTNRQLFNYQIGNIEVEPGNLNFSVVPELDFSVSQDLFNNTSVQQSQTASFNESRTETTSTAVTHGVKSGVTVSASAKFNAKILVKSIEQTITTTVSTEYNFSSTTTRTNTVTRGWSIAQPVLVPPHSRVTATLQIYKGDFTVPVLLSLRVYGQTGTLAGNPSFPSLYAATYENTLLGRIREHIAPPALFRASNAYISNGVQAIWRGTATTRVSQGLYSVVRIDERPLAGYSGETRTYYLPVTLSNSSQILTPGSLGSEIPIINPVPNASCKKENSPIIIHHDREKHRERDYDKEHICHDQAEKYERDYDKE.

The tract at residues 318 to 340 (RDYDKEHICHDQAEKYERDYDKE) is disordered.

In terms of biological role, promotes colloidosmotic lysis by binding to the midgut epithelial cells of lepidopteran larvae. The polypeptide is Pesticidal crystal protein Cry15Aa (cry15Aa) (Bacillus thuringiensis subsp. thompsoni).